We begin with the raw amino-acid sequence, 262 residues long: Indole-3-glycerol phosphate synthase (262 aa).

The protein belongs to the TrpC family.

The enzyme catalyses 1-(2-carboxyphenylamino)-1-deoxy-D-ribulose 5-phosphate + H(+) = (1S,2R)-1-C-(indol-3-yl)glycerol 3-phosphate + CO2 + H2O. Its pathway is amino-acid biosynthesis; L-tryptophan biosynthesis; L-tryptophan from chorismate: step 4/5. The polypeptide is Indole-3-glycerol phosphate synthase (Bordetella bronchiseptica (strain ATCC BAA-588 / NCTC 13252 / RB50) (Alcaligenes bronchisepticus)).